We begin with the raw amino-acid sequence, 462 residues long: Argininosuccinate lyase (462 aa).

It belongs to the lyase 1 family. Argininosuccinate lyase subfamily.

The protein resides in the cytoplasm. The catalysed reaction is 2-(N(omega)-L-arginino)succinate = fumarate + L-arginine. The protein operates within amino-acid biosynthesis; L-arginine biosynthesis; L-arginine from L-ornithine and carbamoyl phosphate: step 3/3. The polypeptide is Argininosuccinate lyase (Methylobacterium nodulans (strain LMG 21967 / CNCM I-2342 / ORS 2060)).